A 293-amino-acid chain; its full sequence is Signal recognition particle receptor FtsY (293 aa).

GTP is bound by residues 93-100 (GVNGAGKT), 175-179 (DTAGR), and 239-242 (TKLD).

It belongs to the GTP-binding SRP family. FtsY subfamily. In terms of assembly, part of the signal recognition particle protein translocation system, which is composed of SRP and FtsY. SRP is a ribonucleoprotein composed of Ffh and a 4.5S RNA molecule.

It localises to the cell inner membrane. The protein resides in the cytoplasm. The enzyme catalyses GTP + H2O = GDP + phosphate + H(+). Its function is as follows. Involved in targeting and insertion of nascent membrane proteins into the cytoplasmic membrane. Acts as a receptor for the complex formed by the signal recognition particle (SRP) and the ribosome-nascent chain (RNC). Interaction with SRP-RNC leads to the transfer of the RNC complex to the Sec translocase for insertion into the membrane, the hydrolysis of GTP by both Ffh and FtsY, and the dissociation of the SRP-FtsY complex into the individual components. The sequence is that of Signal recognition particle receptor FtsY from Helicobacter pylori (strain ATCC 700392 / 26695) (Campylobacter pylori).